The following is a 749-amino-acid chain: Catalase-peroxidase 2 (749 aa).

A signal peptide spans 1–27 (MFKRTIPLFAAFTLAISPSIFPNYAHA). Positions 107 to 229 (WHAAGTYRIY…LAATVMGLIY (123 aa)) form a cross-link, tryptophyl-tyrosyl-methioninium (Trp-Tyr) (with M-255). Residue His-108 is the Proton acceptor of the active site. Residues 229 to 255 (YVNPEGPNGVPDPLAAAEKIRETFGRM) constitute a cross-link (tryptophyl-tyrosyl-methioninium (Tyr-Met) (with W-107)). His-270 contributes to the heme b binding site.

The protein belongs to the peroxidase family. Peroxidase/catalase subfamily. As to quaternary structure, homodimer or homotetramer. The cofactor is heme b. In terms of processing, formation of the three residue Trp-Tyr-Met cross-link is important for the catalase, but not the peroxidase activity of the enzyme.

The catalysed reaction is H2O2 + AH2 = A + 2 H2O. It carries out the reaction 2 H2O2 = O2 + 2 H2O. Functionally, bifunctional enzyme with both catalase and broad-spectrum peroxidase activity. The chain is Catalase-peroxidase 2 from Legionella pneumophila subsp. pneumophila (strain Philadelphia 1 / ATCC 33152 / DSM 7513).